A 165-amino-acid polypeptide reads, in one-letter code: MELYFFRHGIAADRADYAEDGDRPLTTKGETRTKLVAQRLQQLGLHFEGILTSPLLRARQTAEILAAAELGPHPQVFQGLAPRGSLGAFLAWLERWEAAPDAKLVLVGHQPDLGEWAEAIAFGQTGHHLNLKKAGIIGLRSGAARIQAHTDNELFLLTSPKWLLP.

It belongs to the SixA phosphatase family.

This is an uncharacterized protein from Picosynechococcus sp. (strain ATCC 27264 / PCC 7002 / PR-6) (Agmenellum quadruplicatum).